A 276-amino-acid polypeptide reads, in one-letter code: Exosome complex component Rrp42 (276 aa).

The protein belongs to the RNase PH family. Rrp42 subfamily. Component of the archaeal exosome complex. Forms a hexameric ring-like arrangement composed of 3 Rrp41-Rrp42 heterodimers. The hexameric ring associates with a trimer of Rrp4 and/or Csl4 subunits.

The protein localises to the cytoplasm. In terms of biological role, non-catalytic component of the exosome, which is a complex involved in RNA degradation. Contributes to the structuring of the Rrp41 active site. This chain is Exosome complex component Rrp42, found in Aeropyrum pernix (strain ATCC 700893 / DSM 11879 / JCM 9820 / NBRC 100138 / K1).